Reading from the N-terminus, the 171-residue chain is uncharacterized protein (171 aa).

In terms of domain architecture, PfpI endopeptidase spans 3-171; it reads KKVAIILANE…FNREIVKQLQ (169 aa).

Belongs to the peptidase C56 family.

This is an uncharacterized protein from Staphylococcus aureus (strain COL).